The primary structure comprises 297 residues: Ribosomal RNA small subunit methyltransferase H (297 aa).

S-adenosyl-L-methionine contacts are provided by residues 30-32 (GGY), Asp-48, Phe-75, Asp-96, and Gln-103.

This sequence belongs to the methyltransferase superfamily. RsmH family.

The protein resides in the cytoplasm. It carries out the reaction cytidine(1402) in 16S rRNA + S-adenosyl-L-methionine = N(4)-methylcytidine(1402) in 16S rRNA + S-adenosyl-L-homocysteine + H(+). Its function is as follows. Specifically methylates the N4 position of cytidine in position 1402 (C1402) of 16S rRNA. The chain is Ribosomal RNA small subunit methyltransferase H from Ehrlichia canis (strain Jake).